The following is a 550-amino-acid chain: Chaperonin GroEL (550 aa).

Residues Thr29 to Pro32, Lys50, Asp86 to Thr90, Gly414, and Asp495 each bind ATP.

The protein belongs to the chaperonin (HSP60) family. As to quaternary structure, forms a cylinder of 14 subunits composed of two heptameric rings stacked back-to-back. Interacts with the co-chaperonin GroES.

The protein resides in the cytoplasm. It catalyses the reaction ATP + H2O + a folded polypeptide = ADP + phosphate + an unfolded polypeptide.. Its function is as follows. Together with its co-chaperonin GroES, plays an essential role in assisting protein folding. The GroEL-GroES system forms a nano-cage that allows encapsulation of the non-native substrate proteins and provides a physical environment optimized to promote and accelerate protein folding. This chain is Chaperonin GroEL, found in Parvibaculum lavamentivorans (strain DS-1 / DSM 13023 / NCIMB 13966).